The chain runs to 50 residues: Defensin D2 (50 aa).

Intrachain disulfides connect cysteine 3-cysteine 50, cysteine 14-cysteine 35, cysteine 20-cysteine 44, and cysteine 24-cysteine 46.

Post-translationally, contains 4 disulfide bonds.

The protein resides in the secreted. In terms of biological role, antimicrobial peptide active against fungi, Gram-positive and Gram-negative bacteria. Inhibits growth of hyphae in the fungi A.niger (IC(50)=3.5 ug/ml), B.sorokiniana (IC(50)=1.8 ug/ml), F.oxysporum (IC(50)=5.3 ug/ml), F.graminearum (IC(50)=6.9 ug/ml), F.culmorum (IC(50)=6.9 ug/ml) and B.cinerea (IC(50)=13.7 ug/ml). Has no effect on spore germination. Destroys spores in germinated conidia by disruption of cell walls and membranes in A.niger and B.sorokiniana. Causes vacuolization of germinated macro- and microconidia in F.oxysporum, F.graminearum and F.culmorum. Strongly inhibits growth of P.infestans on potato tubers above concentrations of 3.4 ug/ml. Inhibits growth of Gram-positive bacteria C.michiganensis and B.subtilis and of Gram-negative bacteria P.syringae, E.carotovora and E.coli. The chain is Defensin D2 from Nigella sativa (Black cumin).